The primary structure comprises 501 residues: Cytochrome P450 3A6 (501 aa).

Cysteine 440 is a heme binding site.

The protein belongs to the cytochrome P450 family. Requires heme as cofactor.

The protein localises to the endoplasmic reticulum membrane. It localises to the microsome membrane. It carries out the reaction an organic molecule + reduced [NADPH--hemoprotein reductase] + O2 = an alcohol + oxidized [NADPH--hemoprotein reductase] + H2O + H(+). Functionally, exhibits progesterone 6 beta-hydroxylase activity. In Oryctolagus cuniculus (Rabbit), this protein is Cytochrome P450 3A6 (CYP3A6).